A 732-amino-acid polypeptide reads, in one-letter code: Polyribonucleotide nucleotidyltransferase (732 aa).

2 residues coordinate Mg(2+): D483 and D489. In terms of domain architecture, KH spans 550-609 (PRIVTVQIPVDKIGELIGPKGKNIRGIQDETGAELSVEDDGTVTIAAVGGDSMERAKQMV). The 69-residue stretch at 619–687 (GETYEGTVKT…ERGRLRLSMK (69 aa)) folds into the S1 motif domain. A disordered region spans residues 684–732 (LSMKALLPKPEGMPDEPPQSERPRRDDGERSGGDRGGRGGRNGGGRDRR). Positions 702–720 (QSERPRRDDGERSGGDRGG) are enriched in basic and acidic residues.

This sequence belongs to the polyribonucleotide nucleotidyltransferase family. It depends on Mg(2+) as a cofactor.

It localises to the cytoplasm. The catalysed reaction is RNA(n+1) + phosphate = RNA(n) + a ribonucleoside 5'-diphosphate. Functionally, involved in mRNA degradation. Catalyzes the phosphorolysis of single-stranded polyribonucleotides processively in the 3'- to 5'-direction. The sequence is that of Polyribonucleotide nucleotidyltransferase from Gemmatimonas aurantiaca (strain DSM 14586 / JCM 11422 / NBRC 100505 / T-27).